The primary structure comprises 248 residues: UPF0246 protein RF_0769 (248 aa).

This sequence belongs to the UPF0246 family.

The chain is UPF0246 protein RF_0769 from Rickettsia felis (strain ATCC VR-1525 / URRWXCal2) (Rickettsia azadi).